We begin with the raw amino-acid sequence, 196 residues long: MSATSILIAAAESGHSDENVLIPPLSELLIGTLSFALLVAFFFWKIRPQIARTYAQRTERIEGGLARAEAAQREAQALLEQYRAQLAEARTEAARIREEAHSEGRQITEELRAAAQREIAEIKARADAQLAADRAQIVAQVRREVGEIAVDLASKIVGFQLESSATQNRLIDDFIAALDNSAEGVGTVAAPVRPGG.

The chain crosses the membrane as a helical span at residues Pro24–Trp44.

The protein belongs to the ATPase B chain family. In terms of assembly, F-type ATPases have 2 components, F(1) - the catalytic core - and F(0) - the membrane proton channel. F(1) has five subunits: alpha(3), beta(3), gamma(1), delta(1), epsilon(1). F(0) has three main subunits: a(1), b(2) and c(10-14). The alpha and beta chains form an alternating ring which encloses part of the gamma chain. F(1) is attached to F(0) by a central stalk formed by the gamma and epsilon chains, while a peripheral stalk is formed by the delta and b chains.

It is found in the cell membrane. Functionally, f(1)F(0) ATP synthase produces ATP from ADP in the presence of a proton or sodium gradient. F-type ATPases consist of two structural domains, F(1) containing the extramembraneous catalytic core and F(0) containing the membrane proton channel, linked together by a central stalk and a peripheral stalk. During catalysis, ATP synthesis in the catalytic domain of F(1) is coupled via a rotary mechanism of the central stalk subunits to proton translocation. Component of the F(0) channel, it forms part of the peripheral stalk, linking F(1) to F(0). This is ATP synthase subunit b from Frankia casuarinae (strain DSM 45818 / CECT 9043 / HFP020203 / CcI3).